A 257-amino-acid chain; its full sequence is Ribosomal RNA small subunit methyltransferase J (257 aa).

Residues 107–108 (RD), 123–124 (ER), and Asp177 each bind S-adenosyl-L-methionine.

This sequence belongs to the methyltransferase superfamily. RsmJ family.

Its subcellular location is the cytoplasm. The enzyme catalyses guanosine(1516) in 16S rRNA + S-adenosyl-L-methionine = N(2)-methylguanosine(1516) in 16S rRNA + S-adenosyl-L-homocysteine + H(+). Specifically methylates the guanosine in position 1516 of 16S rRNA. The chain is Ribosomal RNA small subunit methyltransferase J from Haemophilus influenzae (strain ATCC 51907 / DSM 11121 / KW20 / Rd).